Here is a 149-residue protein sequence, read N- to C-terminus: 3-hydroxyacyl-[acyl-carrier-protein] dehydratase FabZ (149 aa).

Residue histidine 49 is part of the active site.

The protein belongs to the thioester dehydratase family. FabZ subfamily.

The protein resides in the cytoplasm. It carries out the reaction a (3R)-hydroxyacyl-[ACP] = a (2E)-enoyl-[ACP] + H2O. Involved in unsaturated fatty acids biosynthesis. Catalyzes the dehydration of short chain beta-hydroxyacyl-ACPs and long chain saturated and unsaturated beta-hydroxyacyl-ACPs. The polypeptide is 3-hydroxyacyl-[acyl-carrier-protein] dehydratase FabZ (Sulfurimonas denitrificans (strain ATCC 33889 / DSM 1251) (Thiomicrospira denitrificans (strain ATCC 33889 / DSM 1251))).